Here is a 468-residue protein sequence, read N- to C-terminus: Methylenetetrahydrofolate--tRNA-(uracil-5-)-methyltransferase TrmFO (468 aa).

13–18 (GGGLAG) contributes to the FAD binding site.

It belongs to the MnmG family. TrmFO subfamily. The cofactor is FAD.

Its subcellular location is the cytoplasm. The enzyme catalyses uridine(54) in tRNA + (6R)-5,10-methylene-5,6,7,8-tetrahydrofolate + NADH + H(+) = 5-methyluridine(54) in tRNA + (6S)-5,6,7,8-tetrahydrofolate + NAD(+). It carries out the reaction uridine(54) in tRNA + (6R)-5,10-methylene-5,6,7,8-tetrahydrofolate + NADPH + H(+) = 5-methyluridine(54) in tRNA + (6S)-5,6,7,8-tetrahydrofolate + NADP(+). Functionally, catalyzes the folate-dependent formation of 5-methyl-uridine at position 54 (M-5-U54) in all tRNAs. In Bartonella henselae (strain ATCC 49882 / DSM 28221 / CCUG 30454 / Houston 1) (Rochalimaea henselae), this protein is Methylenetetrahydrofolate--tRNA-(uracil-5-)-methyltransferase TrmFO.